The primary structure comprises 533 residues: Beta-1,2-xylosyltransferase RCN11 (533 aa).

Residues Met1–Arg23 lie on the Cytoplasmic side of the membrane. Residues Ile24–Leu44 traverse the membrane as a helical; Signal-anchor for type II membrane protein segment. Residues Leu45–Cys533 are Lumenal-facing. The tract at residues His51–Asp78 is disordered. Basic and acidic residues predominate over residues Pro56–Val65. 2 N-linked (GlcNAc...) asparagine glycosylation sites follow: Asn307 and Asn313.

This sequence belongs to the glycosyltransferase 61 family. Expressed at the base of the crown roots and in the basal region of the shoot, which contains the shoot and axillary meristems.

It is found in the golgi apparatus membrane. It functions in the pathway glycan metabolism. Glycosyltransferase involved in the xylosylation of N-glycans. Possesses beta-1,2-xylosyltransferase activity, transferring xylose from UDP-xylose to the core beta-linked mannose of N-glycans. Beta-1,2-linked xylose residues on N-glycans are critical for seed germination and plant development and growth under conditions of abiotic stress. This Oryza sativa subsp. japonica (Rice) protein is Beta-1,2-xylosyltransferase RCN11.